The primary structure comprises 583 residues: Sensor protein SrrB (583 aa).

Topologically, residues 1 to 11 are cytoplasmic; it reads MMSRLNSVVIK. Residues 12 to 32 traverse the membrane as a helical segment; it reads LWLTIILIVTTVLILLSIALI. The Extracellular segment spans residues 33–174; sequence TFMQYYFTQE…SIEDTNNAIT (142 aa). Residues 175–195 traverse the membrane as a helical segment; that stretch reads IITIITAVIFLTITTVFAFFL. Topologically, residues 196-583 are cytoplasmic; that stretch reads SSRITKPLRR…TFIIKLPKPE (388 aa). Residues 197-249 enclose the HAMP domain; it reads SRITKPLRRLRDQATRVSEGDYSYKPSVTTKDEIGQLSQAFNQMSTEIEEHVD. One can recognise a Histidine kinase domain in the interval 366 to 583; that stretch reads NVSHELRTPI…TFIIKLPKPE (218 aa). The residue at position 369 (His-369) is a Phosphohistidine; by autocatalysis.

It is found in the cell membrane. The catalysed reaction is ATP + protein L-histidine = ADP + protein N-phospho-L-histidine.. Member of the two-component regulatory system SrrA/SrrB, which is involved in the global regulation of staphylococcal virulence factors in response to environmental oxygen levels as well as biofilm formation. Also plays an essential role in host-derived nitric oxide resistance by regulating hmp/flavohemoglobin, an enzyme that detoxifies nitric oxide by converting it to nitrate. Functions as a sensor protein kinase which is autophosphorylated at a histidine residue and transfers its phosphate group to SrrA. In turn, SrrA binds to the upstream promoter regions of the target genes to positively and negatively regulate their expression. The protein is Sensor protein SrrB (srrB) of Staphylococcus aureus.